The primary structure comprises 276 residues: Undecaprenyl-diphosphatase 1 (276 aa).

6 consecutive transmembrane segments (helical) span residues 43–63 (RAMA…VWEF), 85–105 (ANLL…ADLI), 109–129 (LFNP…MLWA), 184–204 (ATEF…VYSG), 214–234 (ADFP…MIAV), and 254–274 (IVFG…WTAA).

It belongs to the UppP family.

It localises to the cell inner membrane. It carries out the reaction di-trans,octa-cis-undecaprenyl diphosphate + H2O = di-trans,octa-cis-undecaprenyl phosphate + phosphate + H(+). Its function is as follows. Catalyzes the dephosphorylation of undecaprenyl diphosphate (UPP). Confers resistance to bacitracin. The chain is Undecaprenyl-diphosphatase 1 from Pseudomonas fluorescens (strain Pf0-1).